Here is a 516-residue protein sequence, read N- to C-terminus: Oxysterol-binding protein-like protein 1 (516 aa).

Disordered regions lie at residues 168 to 240 (PLGK…SQKS) and 459 to 501 (KQEI…EEGK). The segment covering 178-187 (SRTTSSQSVA) has biased composition (polar residues). S182 carries the post-translational modification Phosphoserine. Over residues 197–206 (TSKKKSSKKN) the composition is skewed to basic residues. The segment covering 218 to 238 (DRSSTAPSTAESNNEHLSSSQ) has biased composition (polar residues).

It belongs to the OSBP family.

It localises to the endoplasmic reticulum. The chain is Oxysterol-binding protein-like protein 1 (obp1) from Schizosaccharomyces pombe (strain 972 / ATCC 24843) (Fission yeast).